The primary structure comprises 159 residues: Small ribosomal subunit protein uS7 (159 aa).

Belongs to the universal ribosomal protein uS7 family. Part of the 30S ribosomal subunit. Contacts proteins S9 and S11.

In terms of biological role, one of the primary rRNA binding proteins, it binds directly to 16S rRNA where it nucleates assembly of the head domain of the 30S subunit. Is located at the subunit interface close to the decoding center, probably blocks exit of the E-site tRNA. The chain is Small ribosomal subunit protein uS7 from Wolbachia sp. subsp. Brugia malayi (strain TRS).